The chain runs to 2729 residues: Protein NO VEIN (2729 aa).

Residues 1–27 are disordered; it reads MQGNHDGSWSLHPSTNNGSGRANGNIN. Short sequence motifs (nuclear localization signal) lie at residues 194–201 and 473–480; these read KRKVDVLR and MKRLGGSN. Disordered regions lie at residues 477–517 and 2482–2515; these read GGSN…IPKL and LPSSSKTRHGSSKTNTDDSKQELDTSSSKEDVTE. Composition is skewed to basic and acidic residues over residues 488-497 and 2496-2515; these read RNHEKSDSSK and NTDDSKQELDTSSSKEDVTE.

In terms of tissue distribution, specifically expressed in developing embryos, leaf primordia, and shoot and root apical meristems.

Its subcellular location is the nucleus. Functionally, essential protein required for cell fate determination during embryogenesis. Mediates auxin-dependent coordinated cell-fate specification and patterning in embryos (e.g. cotyledon outgrowth and separation), shoots and roots (e.g. leaf vascular development, cellular patterning and stem cell maintenance in the meristems). Required for provascular PIN1 expression and region-specific expression of PIN7 in leaf primordia, cell type-specific expression of PIN3, PIN4, and PIN7 in the root, and PIN2 polarity in the root cortex. The protein is Protein NO VEIN of Arabidopsis thaliana (Mouse-ear cress).